The primary structure comprises 547 residues: MPRSLDNFQNEDSSHPNEQGAWADSGSGFPNPNSNDVSNSQRNHHRHMFPLARIRSELSEQDSSISFTHDPLHIPLPNPSNNNDNIFHPQVHSSFHSRSASRQRRRSGLSRSNATRYSRRSLSDWLETIRENNYDEASIPSFFSPHTERLVGRVLRLNRYLQNSELLDRNSSTFGSNPNSVFSAQPTEPSVEPPTSSFPIQPPLPPSRSISISNPQSLSFPSSFDQSNYNFQAASTPQFNPLIEHLRRSNSPLNPSHDSAGASTFNTYFPNSTYQNILNSLDNNPAVLDLNGPPNQESSSSASSYGSRTQTPNARSCSLNIVFHKHKKVCTYYMIRHYAKRRLFITPTWWLRSGSVFRGLQFGGVQSISGLPPLTNPKERWIVDVSIHVVDYKRRALEGQLNAQARSSDPSSTISTAWTGEILDFSEKLNFATEKWSAPLEIDVCYWRKLAPFQNMDTNTFLETITNPKKLYKICQKYIFMRWKDMLILKDQTDTSESRITGFYFCCLCRENGYIQGYYYDPKHAFCSQPLNLFPEQPSLSPSYHFV.

Polar residues-rich tracts occupy residues 1–11 and 28–41; these read MPRSLDNFQNE and GFPNPNSNDVSNSQ. 4 disordered regions span residues 1 to 42, 60 to 115, 169 to 217, and 285 to 313; these read MPRS…NSQR, EQDS…SNAT, RNSS…NPQS, and PAVLDLNGPPNQESSSSASSYGSRTQTPN. Over residues 99 to 108 the composition is skewed to basic residues; sequence SASRQRRRSG. Residues 169 to 185 are compositionally biased toward polar residues; that stretch reads RNSSTFGSNPNSVFSAQ. Low complexity-rich tracts occupy residues 186-199, 207-217, and 298-307; these read PTEPSVEPPTSSFP, SRSISISNPQS, and SSSSASSYGS.

It belongs to the GID4/VID24 family. In terms of assembly, substrate-recognition component of the GID/CTLH complex. In the absence of stress, the complex exists as an inactive anticipatory complex (GID(Ant)), composed of Gid1, the E3 ubiquitin-ligase Gid2, Gid5, Gid8, and the RING-like subunit Gid9, awaiting a substrate receptor to form the active E3 ligase complex. When cells are shifted to glucose-containing medium, the substrate receptor Gid4 is induced and becomes part of the complex, named GID(SR4). Additionally, Gid7 transforms the GID(SR4) E3 ligase core into a higher-order supramolecular assembly (Chelator-GID(SR4)). Under osmotic or heat stress, the substrate receptor Gid10 is induced and becomes part of the complex, named GID(SR10). Interacts with proteins that have an N-terminal Pro/N-degron.

The protein localises to the nucleus. Substrate-recognition component of the GID E3 ligase complex recruiting N termini and catalyzing ubiquitination of proteins targeted for degradation. GID E3 is regulated through assembly with interchangeable N-degron-binding substrate receptors induced by distinct environmental perturbations. Required for the adaptation to osmotic or heat stress. Specific for substrates with an N-terminal Pro (Pro/N-degron). In Schizosaccharomyces pombe (strain 972 / ATCC 24843) (Fission yeast), this protein is GID complex substrate-recognition subunit 10 (gid10).